Reading from the N-terminus, the 360-residue chain is Sensor histidine kinase LiaS (360 aa).

The Cytoplasmic portion of the chain corresponds to 1 to 15; it reads MRKKMLASLQWRAIR. Residues 16 to 36 form a helical membrane-spanning segment; the sequence is MTTGISLLLFVCLISFMMFYY. At 37-47 the chain is on the extracellular side; sequence RLDPLVLLSSS. A helical transmembrane segment spans residues 48 to 68; the sequence is WFGIPFILILLLISVTVGFAS. The Cytoplasmic portion of the chain corresponds to 69–360; that stretch reads GYMYGNRLKT…ENERDSSIID (292 aa). One can recognise an HAMP domain in the interval 74–126; sequence NRLKTRIDTLIESILTFENGNFAYRIPPLGDDEIGLAADQLNEMAKRVELQVA. Residues 153-346 enclose the Histidine kinase domain; it reads RLARDLHDAV…QIEVKVPIFP (194 aa). The residue at position 159 (histidine 159) is a Phosphohistidine; by autocatalysis.

It is found in the cell membrane. The catalysed reaction is ATP + protein L-histidine = ADP + protein N-phospho-L-histidine.. Its function is as follows. Member of the two-component regulatory system LiaS/LiaR probably involved in response to a subset of cell wall-active antibiotics that interfere with the lipid II cycle in the cytoplasmic membrane (bacitracin, nisin, ramoplanin and vancomycin). Also seems to be involved in response to cationic antimicrobial peptides and secretion stress. Activates probably LiaR by phosphorylation. This is Sensor histidine kinase LiaS (liaS) from Bacillus subtilis (strain 168).